The primary structure comprises 1439 residues: Myomesin-3 (1439 aa).

The tract at residues 1–57 (MTLPHSPGSAGEPQASQTVQVHRLEHRQEEEQKEERQHSLQMGSSVQRRTYRSSEEE) is disordered. Residues 22 to 38 (HRLEHRQEEEQKEERQH) show a composition bias toward basic and acidic residues. Positions 39–48 (SLQMGSSVQR) are enriched in polar residues. Positions 119–149 (QRLLRQRRDWKALRQRTEEKVREAKELIELC) form a coiled coil. 2 consecutive Ig-like C2-type domains span residues 154-246 (PWFW…AKVL) and 269-362 (PSAE…AYVF). 5 consecutive Fibronectin type-III domains span residues 376–471 (SPLN…TGDY), 504–599 (APTN…LKGK), 605–698 (PPAQ…VKQA), 704–799 (APYD…CKEW), and 806–901 (PPYD…LEDK). 2 Ig-like C2-type domains span residues 1122 to 1207 (PYFQ…LDLT) and 1336 to 1425 (AKVV…VTIS).

Homodimer. Mainly expressed in slow muscle, extraocular muscle and embryonic/neonatal skeletal muscle (at protein level). Expression in skeletal muscle is fiber type specific, with the highest levels in type IIA fibers (intermediate speed) and lower levels in type I fibers.

It localises to the cytoplasm. It is found in the myofibril. The protein resides in the sarcomere. Its subcellular location is the m line. May link the intermediate filament cytoskeleton to the M-disk of the myofibrils in striated muscle. The protein is Myomesin-3 (Myom3) of Mus musculus (Mouse).